The primary structure comprises 510 residues: GMP synthase [glutamine-hydrolyzing] (510 aa).

The Glutamine amidotransferase type-1 domain occupies 5-195 (LVLVVDFGGQ…LFNVCNLKGD (191 aa)). The active-site Nucleophile is Cys-82. Catalysis depends on residues His-169 and Glu-171. The GMPS ATP-PPase domain maps to 196 to 385 (WSMSSFAEQQ…LGIPHKLVWR (190 aa)). 223 to 229 (SGGVDSS) provides a ligand contact to ATP.

In terms of assembly, homodimer.

It catalyses the reaction XMP + L-glutamine + ATP + H2O = GMP + L-glutamate + AMP + diphosphate + 2 H(+). The protein operates within purine metabolism; GMP biosynthesis; GMP from XMP (L-Gln route): step 1/1. Functionally, catalyzes the synthesis of GMP from XMP. This Clostridium botulinum (strain Kyoto / Type A2) protein is GMP synthase [glutamine-hydrolyzing].